Consider the following 177-residue polypeptide: Isopentenyl-diphosphate Delta-isomerase (177 aa).

Mn(2+) contacts are provided by histidine 22 and histidine 28. Residues 26 to 160 (LRHKAISVFV…PERFTPWLRI (135 aa)) form the Nudix hydrolase domain. The active site involves cysteine 62. Histidine 64 serves as a coordination point for Mn(2+). Glutamate 82 contributes to the Mg(2+) binding site. Residues glutamate 108 and glutamate 110 each contribute to the Mn(2+) site. Residue glutamate 110 is part of the active site.

This sequence belongs to the IPP isomerase type 1 family. It depends on Mg(2+) as a cofactor. Requires Mn(2+) as cofactor.

The protein resides in the cytoplasm. The catalysed reaction is isopentenyl diphosphate = dimethylallyl diphosphate. It functions in the pathway isoprenoid biosynthesis; dimethylallyl diphosphate biosynthesis; dimethylallyl diphosphate from isopentenyl diphosphate: step 1/1. Its pathway is porphyrin-containing compound metabolism; chlorophyll biosynthesis. Functionally, catalyzes the 1,3-allylic rearrangement of the homoallylic substrate isopentenyl (IPP) to its highly electrophilic allylic isomer, dimethylallyl diphosphate (DMAPP). The protein is Isopentenyl-diphosphate Delta-isomerase of Cereibacter sphaeroides (strain ATCC 17025 / ATH 2.4.3) (Rhodobacter sphaeroides).